Consider the following 421-residue polypeptide: Tol-Pal system protein TolA (421 aa).

Over 1 to 13 the chain is Cytoplasmic; sequence MSKATEQNDKLKR. The helical transmembrane segment at 14–34 threads the bilayer; that stretch reads AIIISAVLHVILFAALIWSSF. Residues 35–421 lie on the Periplasmic side of the membrane; that stretch reads DENIEASAGG…FKNAPLDFKP (387 aa). The interval 48–310 is domain II (alpha-helical); the sequence is SSIDAVMVDS…LSSGKNAPKT (263 aa). Residues 65–266 form a disordered region; it reads KRMQSQESSA…KAAADKKAAA (202 aa). Composition is skewed to basic and acidic residues over residues 73–175 and 206–266; these read SAKR…EAEA and EARK…KAAA. Repeat copies occupy residues 224–229, 230–234, 235–240, 241–245, 246–250, 251–255, 256–260, 261–266, 267–271, 272–277, 278–282, 283–287, and 288–292. Residues 224–292 form a 13 X tandem repeats of [EDA]-K(1,2)-A(2,4) region; sequence EKKAAAEKAA…EKAAAAKAAA (69 aa). Residues 300–336 form a disordered region; it reads ELSSGKNAPKTGGGAKGNNASPAGSGNTKNNGASGAD. Positions 311–421 are domain III (functional); that stretch reads GGGAKGNNAS…FKNAPLDFKP (111 aa). Positions 317–332 are enriched in polar residues; the sequence is NNASPAGSGNTKNNGA. Residues Cys-363 and Cys-388 are joined by a disulfide bond.

This sequence belongs to the TolA family. As to quaternary structure, the Tol-Pal system is composed of five core proteins: the inner membrane proteins TolA, TolQ and TolR, the periplasmic protein TolB and the outer membrane protein Pal. They form a network linking the inner and outer membranes and the peptidoglycan layer. TolA interacts with TolQ and TolR via its N-terminal domain. Interacts with CpoB, and with the trimeric porins OmpC, OmpF, PhoE and LamB via its central domain. Interacts with TolB via its C-terminal domain. Also interacts with Pal via its C-terminal domain. This interaction is proton motive force dependent and requires TolQ and TolR.

The protein localises to the cell inner membrane. In terms of biological role, part of the Tol-Pal system, which plays a role in outer membrane invagination during cell division and is important for maintaining outer membrane integrity. The Tol-Pal system is also required for polar localization of chemoreceptors clusters. The system also appears to be required for the activity of several outer membrane-localized enzymes with cell wall remodeling activity. Is involved in the uptake of group A colicins (colicins A, E1, E2, E3, and K) and in the uptake of filamentous phage DNA. This is Tol-Pal system protein TolA from Escherichia coli (strain K12).